Here is a 916-residue protein sequence, read N- to C-terminus: MNYKDTLLMPKTDFPMRGGLPNKEPQIQEQWEANNQYQKALEKNKGNQSYILHDGPPYANGNLHMGHALNKIIKDIIVRYKTMQGFYAPYVPGWDTHGLPIEQALTKKGVDRKKMSIAEFREKCKEFALEQIELQKKDFKRLGVRGDFNDPYITLKPEYEAAQIRLFGEMADKGLIYKGKKPVYWSPSSESSLAEAEIEYHDKRSASIYVAFDVKDTKGVVDQDAQFIIWTTTPWTIPSNVAITVHPDLKYGQYNVNGKKYIIAQALSEDVAEALEWDKDAIQLEKEFTGKELEYVEAQHPFLDRISLVINGNHVTTDAGTGCVHTAPGHGEDDYIVGQKYDLPVISPLDDKGVFTEEGGQFEGMFYDKANKAVTDLLTEKDALLKLNFITHSYPHDWRTKKPVIFRATPQWFASINKVRQDILDAIEETDFKVDWGKTRIYNMIRDRGEWVISRQRVWGVPLPVFYAENGDIIMTKETVNHVADLFEEHGSNIWFEREAKDLLPEGFTHPGSPNGTFTKEMDIMDVWFDSGSSHRGVLENRPELSFPADLYFEGSDQYRGWFNSSITTAVATRGQAPYKFLLSHGFVMDGEGKKMSKSLGNVIVPDQVVKQKGADIARLWVSSTDYLADVRISDEILKQTSDVYRKIRNTLRFMLGNINDFNPDTDVIPEAELLEVDRYLLNRLREFTASTIEHYDNFDYLNIYQEVQNFINVELSNFYLDYGKDILYIEEKNAHKRRSMQTVLYQILVDMTKLLAPILVHTAEEVWTHTPHVKEESVHLADMPKVVEVDQALLDKWNQFMALRDDVNRALEVARNNKVIGKSLEAKVVIGNNDNFKAAEFLQQFEDLQQLFIVSQVEVSDSVDNAEAYQHGDIRIDHAVGEKCERCWNYTEELGSVGELEHLCPRCQEVVKTLV.

Positions 57–67 (PYANGNLHMGH) match the 'HIGH' region motif. L-isoleucyl-5'-AMP is bound at residue glutamate 554. Residues 595–599 (KMSKS) carry the 'KMSKS' region motif. An ATP-binding site is contributed by lysine 598. Positions 885, 888, 905, and 908 each coordinate Zn(2+).

The protein belongs to the class-I aminoacyl-tRNA synthetase family. IleS type 1 subfamily. Monomer. It depends on Zn(2+) as a cofactor.

The protein resides in the cytoplasm. The enzyme catalyses tRNA(Ile) + L-isoleucine + ATP = L-isoleucyl-tRNA(Ile) + AMP + diphosphate. Functionally, catalyzes the attachment of isoleucine to tRNA(Ile). As IleRS can inadvertently accommodate and process structurally similar amino acids such as valine, to avoid such errors it has two additional distinct tRNA(Ile)-dependent editing activities. One activity is designated as 'pretransfer' editing and involves the hydrolysis of activated Val-AMP. The other activity is designated 'posttransfer' editing and involves deacylation of mischarged Val-tRNA(Ile). This is Isoleucine--tRNA ligase from Staphylococcus haemolyticus (strain JCSC1435).